The chain runs to 158 residues: 6,7-dimethyl-8-ribityllumazine synthase (158 aa).

5-amino-6-(D-ribitylamino)uracil-binding positions include F22, 56–58, and 80–82; these read ALE and VVI. Residue 85–86 participates in (2S)-2-hydroxy-3-oxobutyl phosphate binding; it reads ET. H88 acts as the Proton donor in catalysis. A 5-amino-6-(D-ribitylamino)uracil-binding site is contributed by N113. R127 contributes to the (2S)-2-hydroxy-3-oxobutyl phosphate binding site.

It belongs to the DMRL synthase family.

It carries out the reaction (2S)-2-hydroxy-3-oxobutyl phosphate + 5-amino-6-(D-ribitylamino)uracil = 6,7-dimethyl-8-(1-D-ribityl)lumazine + phosphate + 2 H2O + H(+). It participates in cofactor biosynthesis; riboflavin biosynthesis; riboflavin from 2-hydroxy-3-oxobutyl phosphate and 5-amino-6-(D-ribitylamino)uracil: step 1/2. Functionally, catalyzes the formation of 6,7-dimethyl-8-ribityllumazine by condensation of 5-amino-6-(D-ribitylamino)uracil with 3,4-dihydroxy-2-butanone 4-phosphate. This is the penultimate step in the biosynthesis of riboflavin. This is 6,7-dimethyl-8-ribityllumazine synthase from Neisseria meningitidis serogroup C / serotype 2a (strain ATCC 700532 / DSM 15464 / FAM18).